Here is a 120-residue protein sequence, read N- to C-terminus: Autophagy-related protein 8C (120 aa).

Residues 1–20 (MARSSFKLEHPLERRQAEAN) are disordered. G117 is lipidated: Phosphatidylethanolamine amidated glycine. Residues 118–120 (LFV) constitute a propeptide, removed in mature form.

Belongs to the ATG8 family. Interacts with ATG4. The C-terminal 3 residues are removed by ATG4 to expose Gly-117 at the C-terminus. The C-terminal Gly is then amidated with phosphatidylethanolamine by an activating system similar to that for ubiquitin.

It localises to the cytoplasmic vesicle. It is found in the autophagosome membrane. Its subcellular location is the vacuole membrane. The protein resides in the cytoplasm. The protein localises to the cytoskeleton. Ubiquitin-like modifier involved in autophagosomes formation. May mediate the delivery of the autophagosomes to the vacuole via the microtubule cytoskeleton. The sequence is that of Autophagy-related protein 8C (ATG8C) from Oryza sativa subsp. indica (Rice).